The primary structure comprises 159 residues: 3-hydroxyacyl-[acyl-carrier-protein] dehydratase FabZ (159 aa).

His-58 is a catalytic residue.

This sequence belongs to the thioester dehydratase family. FabZ subfamily.

Its subcellular location is the cytoplasm. It carries out the reaction a (3R)-hydroxyacyl-[ACP] = a (2E)-enoyl-[ACP] + H2O. Functionally, involved in unsaturated fatty acids biosynthesis. Catalyzes the dehydration of short chain beta-hydroxyacyl-ACPs and long chain saturated and unsaturated beta-hydroxyacyl-ACPs. The protein is 3-hydroxyacyl-[acyl-carrier-protein] dehydratase FabZ of Helicobacter pylori (strain ATCC 700392 / 26695) (Campylobacter pylori).